Consider the following 65-residue polypeptide: Large ribosomal subunit protein bL33m (65 aa).

Residues 1–8 constitute a mitochondrion transit peptide; sequence MFLSAVTF.

Belongs to the bacterial ribosomal protein bL33 family. Component of the mitochondrial ribosome large subunit (39S) which comprises a 16S rRNA and about 50 distinct proteins.

Its subcellular location is the mitochondrion. The sequence is that of Large ribosomal subunit protein bL33m (MRPL33) from Bos taurus (Bovine).